The following is a 443-amino-acid chain: C4-dicarboxylate transport protein (443 aa).

9 consecutive transmembrane segments (helical) span residues 17 to 37 (PFYS…ILLG), 57 to 77 (LVKM…IAGM), 92 to 112 (LYFL…ANVV), 139 to 159 (EQSI…GAFA), 161 to 181 (GDIL…AMVG), 201 to 221 (LVAI…AFTI), 234 to 254 (MLIG…LGAV), 320 to 340 (IYMT…LSWG), and 368 to 388 (AATL…ILGI).

It belongs to the dicarboxylate/amino acid:cation symporter (DAACS) (TC 2.A.23) family.

The protein localises to the cell inner membrane. Functionally, responsible for the transport of dicarboxylates such as succinate, fumarate, and malate from the periplasm across the membrane. This chain is C4-dicarboxylate transport protein, found in Rhizobium leguminosarum bv. trifolii (strain WSM2304).